A 665-amino-acid polypeptide reads, in one-letter code: Dystrophia myotonica WD repeat-containing protein (665 aa).

Residues 1 to 11 are compositionally biased toward gly residues; sequence MAAGGAEGGPG. Disordered stretches follow at residues 1 to 91 and 100 to 119; these read MAAG…PALP and LGDP…LGAG. Ala-2 bears the N-acetylalanine mark. The span at 52-64 shows a compositional bias: pro residues; the sequence is PAPPQPTQPPPGP. A compositionally biased stretch (low complexity) spans 65–76; the sequence is AAASGPGAAGPA. Over residues 77 to 89 the composition is skewed to pro residues; sequence SSPPPAGPGPGPA. WD repeat units follow at residues 208-248, 279-318, 321-360, and 363-445; these read IDKT…TSTP, VGEG…LRGL, SYFG…VVAR, and GHKS…LSPH. 4 disordered regions span residues 380–413, 446–506, 524–564, and 628–665; these read AEEA…VSPL, PSLA…SMEP, RDRG…RSRL, and DEET…GTVV. A compositionally biased stretch (low complexity) spans 450 to 491; the sequence is RTRTLPGTPGATPPASGSSRAGETGAGPLPRSLSRSNSLPHP. Ser-487 carries the post-translational modification Phosphoserine. Arg-543 carries the post-translational modification Omega-N-methylarginine. One copy of the WD 5 repeat lies at 592 to 629; sequence IAQERLTVLLFLEDCIITACQEGLICTWARPGKAFTDE. A compositionally biased stretch (polar residues) spans 634–646; the sequence is QAGQASWPRSPSK. The segment covering 653–665 has biased composition (low complexity); that stretch reads SSQPGSSPSGTVV.

In terms of assembly, component of the USP12/DMWD/WDR48 deubiquitinating complex. Interacts with USP12; promotes its enzymatic activity. Interacts with USP46. In terms of tissue distribution, widely expressed in brain where it localizes to the olfactory bulb, forebrain, thalamus, hippocampus, cerebellum, cortex and hypothalamus (at protein level). Expression seems to be particularly strong in areas of high synaptic density such as the glomerular layer of the olfactory bulb, and mossy fiber terminal fields of the hippocampus (at protein level). Expressed in retina, with strongest expression in the external and internal plexiform layers (at protein level). Strongly expressed in brain and testis. Also detected at lower levels in heart, kidney, liver, lung, ovary, uterus, bladder and skeletal muscle. In testis, expression seems to be restricted to secondary spermatocytes.

The protein resides in the cytoplasm. The protein localises to the nucleus. Its subcellular location is the perikaryon. It is found in the cell projection. It localises to the dendrite. Functionally, regulator of the deubiquitinating USP12/DMWD/WDR48 complex. Functions as a cofactor that promotes USP12 enzymatic activity. The sequence is that of Dystrophia myotonica WD repeat-containing protein (Dmwd) from Mus musculus (Mouse).